A 1596-amino-acid chain; its full sequence is SET-binding protein (1596 aa).

Residues 1–12 show a composition bias toward polar residues; that stretch reads MESRETLSSSRQ. 3 disordered regions span residues 1-83, 134-426, and 475-518; these read MESR…WVAG, KQSG…SIKA, and SPSV…SRKL. The span at 64 to 81 shows a compositional bias: basic and acidic residues; the sequence is GSGRDVDSNSNADSEKWV. The segment covering 164–175 has biased composition (low complexity); sequence LTASDLAASDLK. 2 stretches are compositionally biased toward polar residues: residues 213 to 236 and 270 to 282; these read KSSS…QNCF and AGNT…NNNK. Positions 290–306 are enriched in low complexity; that stretch reads APSPSSHSSPAPPSSSA. Basic and acidic residues predominate over residues 363–372; sequence DNTEGKREGY. Polar residues predominate over residues 375–395; that stretch reads DSAQEASPARQNVSSASNPEN. The segment at residues 584–596 is a DNA-binding region (a.T hook 1); sequence KKKRGRPKKQPLL. Disordered stretches follow at residues 604–624, 722–763, and 777–796; these read GTST…KKRK, YIGK…AVPS, and HPLS…ASTE. Over residues 779–796 the composition is skewed to polar residues; that stretch reads LSTQLGGSNGNLSPASTE. N6-acetyllysine is present on K817. Over residues 854-880 the composition is skewed to polar residues; the sequence is SPVSESHSEETIPSDSGIGTDNNSTSD. The segment at 854–889 is disordered; it reads SPVSESHSEETIPSDSGIGTDNNSTSDQAEKSSESR. A DNA-binding region (a.T hook 2) is located at residues 1016-1028; it reads KKKRGRPAKTNDT. 6 disordered regions span residues 1134–1164, 1202–1225, 1245–1300, 1325–1344, 1440–1473, and 1518–1596; these read PPKV…DRIL, EKNK…SKNN, AKEK…GSKR, SSYD…KVDQ, QRQS…DQMP, and EAPP…EVLP. Positions 1146-1159 are enriched in basic residues; sequence RLHKRKHKHKHKHK. Over residues 1450–1459 the composition is skewed to basic residues; that stretch reads VKKRRGRPRK. Positions 1451 to 1463 form a DNA-binding region, a.T hook 3; that stretch reads KKRRGRPRKQPTQ. 3 repeat units span residues 1520–1527, 1528–1535, and 1536–1543. The segment at 1520–1543 is 3 X 8 AA tandem repeats of P-P-L-P-P-P-P-P; that stretch reads PPLPPPPPPPLPPPPPPPLPPPPP. 2 stretches are compositionally biased toward pro residues: residues 1520-1546 and 1560-1572; these read PPLP…PLPK and PAQP…PQQP.

As to quaternary structure, interacts with SET. Expressed in numerous tissues. Expressed at low levels in myeloid and monocytic cells as well as in CD34+ cells; expression levels are higher in myeloid malignancies.

It is found in the nucleus. In Homo sapiens (Human), this protein is SET-binding protein (SETBP1).